The primary structure comprises 560 residues: Membrane protein insertase YidC (560 aa).

6 consecutive transmembrane segments (helical) span residues 5–25, 334–354, 357–377, 431–451, 476–496, and 522–542; these read IINLIAAIILSLSIIFGWQYF, AIDFGWFYIITKPVFYAMNFF, YVGNFGVSILIVTVIIKLLMF, LPILVQIPVFFSIYKVLYVTI, LFGLLPFAPPSFLMIGAWPIL, and FMPLIFLFMFSSFPVGLLIYW.

It belongs to the OXA1/ALB3/YidC family. Type 1 subfamily. As to quaternary structure, interacts with the Sec translocase complex via SecD. Specifically interacts with transmembrane segments of nascent integral membrane proteins during membrane integration.

The protein resides in the cell inner membrane. In terms of biological role, required for the insertion and/or proper folding and/or complex formation of integral membrane proteins into the membrane. Involved in integration of membrane proteins that insert both dependently and independently of the Sec translocase complex, as well as at least some lipoproteins. Aids folding of multispanning membrane proteins. The sequence is that of Membrane protein insertase YidC from Rickettsia rickettsii (strain Sheila Smith).